We begin with the raw amino-acid sequence, 129 residues long: Glycine cleavage system H protein (129 aa).

Residues 24–106 (LLKIGVSEFA…IGNGWLLIIK (83 aa)) enclose the Lipoyl-binding domain. Lys-65 is modified (N6-lipoyllysine).

Belongs to the GcvH family. In terms of assembly, the glycine cleavage system is composed of four proteins: P, T, L and H. Requires (R)-lipoate as cofactor.

Its function is as follows. The glycine cleavage system catalyzes the degradation of glycine. The H protein shuttles the methylamine group of glycine from the P protein to the T protein. The protein is Glycine cleavage system H protein of Prochlorococcus marinus (strain MIT 9515).